Reading from the N-terminus, the 268-residue chain is Large ribosomal subunit protein bL9m (268 aa).

The N-terminal 52 residues, 1–52 (MAAAAFAVPRGVQLRVLTERLLRGGVRELLRPRLSGSTPGSERDFSLSHSRG), are a transit peptide targeting the mitochondrion.

Belongs to the bacterial ribosomal protein bL9 family. As to quaternary structure, component of the mitochondrial ribosome large subunit (39S) which comprises a 16S rRNA and about 50 distinct proteins.

It is found in the mitochondrion. This Bos taurus (Bovine) protein is Large ribosomal subunit protein bL9m (MRPL9).